We begin with the raw amino-acid sequence, 407 residues long: Myeloid cell nuclear differentiation antigen (407 aa).

The region spanning 1–88 is the Pyrin domain; it reads MANEYKKILL…VNNLRKERSK (88 aa). The tract at residues 122–211 is disordered; that stretch reads LTSEVGERIP…TRRNVPQKDP (90 aa). The Nuclear localization signal signature appears at 131–137; it reads PVAQKRK. Residues 177–199 show a composition bias toward low complexity; that stretch reads HTSSSTPSNTSFAQNQQTQAQCQ. Residues 196-394 enclose the HIN-200 domain; sequence AQCQVDTRRN…CGSHSFIKVI (199 aa).

As to quaternary structure, participates in a ternary complex with YY1 and the YY1 target DNA element. Binds nucleolin and nucleophosmin/NPM/B23.

Its subcellular location is the nucleus. It localises to the cytoplasm. Its function is as follows. May act as a transcriptional activator/repressor in the myeloid lineage. Plays a role in the granulocyte/monocyte cell-specific response to interferon. Stimulates the DNA binding of the transcriptional repressor protein YY1. In Macaca fascicularis (Crab-eating macaque), this protein is Myeloid cell nuclear differentiation antigen (MNDA).